The primary structure comprises 363 residues: Protein-glutamate methylesterase/protein-glutamine glutaminase 1 (363 aa).

Residues 7-124 form the Response regulatory domain; sequence KVLIVDDSAL…SRGMQEYARE (118 aa). Aspartate 58 carries the post-translational modification 4-aspartylphosphate. One can recognise a CheB-type methylesterase domain in the interval 164–356; it reads FSSTEKIIVI…RRLFGWLESQ (193 aa). Residues serine 176, histidine 202, and aspartate 298 contribute to the active site.

It belongs to the CheB family. In terms of processing, phosphorylated by CheA. Phosphorylation of the N-terminal regulatory domain activates the methylesterase activity.

Its subcellular location is the cytoplasm. It catalyses the reaction [protein]-L-glutamate 5-O-methyl ester + H2O = L-glutamyl-[protein] + methanol + H(+). The catalysed reaction is L-glutaminyl-[protein] + H2O = L-glutamyl-[protein] + NH4(+). In terms of biological role, involved in chemotaxis. Part of a chemotaxis signal transduction system that modulates chemotaxis in response to various stimuli. Catalyzes the demethylation of specific methylglutamate residues introduced into the chemoreceptors (methyl-accepting chemotaxis proteins or MCP) by CheR. Also mediates the irreversible deamidation of specific glutamine residues to glutamic acid. The protein is Protein-glutamate methylesterase/protein-glutamine glutaminase 1 of Geobacter metallireducens (strain ATCC 53774 / DSM 7210 / GS-15).